The following is a 192-amino-acid chain: Peptidyl-tRNA hydrolase (192 aa).

Position 14 (Y14) interacts with tRNA. The active-site Proton acceptor is the H19. TRNA contacts are provided by Y64, N66, and N112.

Belongs to the PTH family. In terms of assembly, monomer.

It is found in the cytoplasm. It catalyses the reaction an N-acyl-L-alpha-aminoacyl-tRNA + H2O = an N-acyl-L-amino acid + a tRNA + H(+). Hydrolyzes ribosome-free peptidyl-tRNAs (with 1 or more amino acids incorporated), which drop off the ribosome during protein synthesis, or as a result of ribosome stalling. Its function is as follows. Catalyzes the release of premature peptidyl moieties from peptidyl-tRNA molecules trapped in stalled 50S ribosomal subunits, and thus maintains levels of free tRNAs and 50S ribosomes. This is Peptidyl-tRNA hydrolase from Anaeromyxobacter sp. (strain K).